The chain runs to 918 residues: Probable lipoxygenase 6 (918 aa).

The tract at residues Ala-56–Glu-76 is disordered. A PLAT domain is found at Gln-90–Ser-218. Residues Pro-221–Ile-918 form the Lipoxygenase domain. Residues His-573, His-578, His-765, Asn-769, and Ile-918 each coordinate Fe cation.

It belongs to the lipoxygenase family. Requires Fe cation as cofactor.

The enzyme catalyses (9Z,12Z)-octadecadienoate + O2 = (13S)-hydroperoxy-(9Z,11E)-octadecadienoate. It carries out the reaction (9Z,12Z,15Z)-octadecatrienoate + O2 = (13S)-hydroperoxy-(9Z,11E,15Z)-octadecatrienoate. It participates in lipid metabolism; oxylipin biosynthesis. In terms of biological role, plant lipoxygenase may be involved in a number of diverse aspects of plant physiology including growth and development, pest resistance, and senescence or responses to wounding. Catalyzes the hydroperoxidation of lipids containing a cis,cis-1,4-pentadiene structure. This chain is Probable lipoxygenase 6, found in Oryza sativa subsp. japonica (Rice).